A 1053-amino-acid chain; its full sequence is CRISPR-associated endonuclease Cas9 (1053 aa).

Residues 1-41 are ruvC-I; the sequence is MKRNYILGLDIGITSVGYGIIDYETRDVIDAGVRLFKEANV. The For RuvC-like nuclease domain role is filled by Asp-10. Asp-10 provides a ligand contact to Mg(2+). The segment at 41-426 is recognition lobe; the sequence is VENNEGRRSK…IFNRLKLVPK (386 aa). The ruvC-II stretch occupies residues 435–481; the sequence is EIPTTLVDDFILSPVVKRSFIQSIKVINAIIKKYGLPNDIIIELARE. Glu-477 and Glu-481 together coordinate Mg(2+). Residues 480–646 enclose the HNH Cas9-type domain; that stretch reads REKNSKDAQK…VQKDFINRNL (167 aa). The active-site Proton acceptor for HNH nuclease domain is His-557. The interval 650–775 is ruvC-III; the sequence is RYATRGLMNL…FKDYKYSHRV (126 aa). His-701 is a Mg(2+) binding site. Tyr-789 contributes to the RNA binding site. PAM substrate-binding stretches follow at residues 882–889 and 985–993; these read YYGNKLNA and NNDLLNRIE. The interval 910-1053 is PAM-interacting domain (PI); sequence KPYRFDVYLD…KKHPQIIKKG (144 aa).

This sequence belongs to the CRISPR-associated Cas9 family. Subtype II-A subfamily. As to quaternary structure, monomer. Binds crRNA and tracrRNA. The cofactor is Mg(2+).

Its function is as follows. CRISPR (clustered regularly interspaced short palindromic repeat) is an adaptive immune system that provides protection against mobile genetic elements (viruses, transposable elements and conjugative plasmids). CRISPR clusters contain spacers, sequences complementary to antecedent mobile elements, and target invading nucleic acids. CRISPR clusters are transcribed and processed into CRISPR RNA (crRNA). In type II CRISPR systems correct processing of pre-crRNA requires a trans-encoded small RNA (tracrRNA), endogenous ribonuclease 3 (rnc) and this protein. The tracrRNA serves as a guide for ribonuclease 3-aided processing of pre-crRNA. Subsequently Cas9/crRNA/tracrRNA endonucleolytically cleaves linear or circular dsDNA target complementary to the spacer; Cas9 is inactive in the absence of the 2 guide RNAs (gRNA). Cas9 recognizes the protospacer adjacent motif (PAM) in the CRISPR repeat sequences to help distinguish self versus nonself, as targets within the bacterial CRISPR locus do not have PAMs. PAM recognition is also required for catalytic activity. This is CRISPR-associated endonuclease Cas9 from Staphylococcus aureus.